A 286-amino-acid chain; its full sequence is Bifunctional protein FolD (286 aa).

NADP(+) is bound by residues 165-167 and Ser-190; that span reads GRS.

It belongs to the tetrahydrofolate dehydrogenase/cyclohydrolase family. In terms of assembly, homodimer.

It carries out the reaction (6R)-5,10-methylene-5,6,7,8-tetrahydrofolate + NADP(+) = (6R)-5,10-methenyltetrahydrofolate + NADPH. The catalysed reaction is (6R)-5,10-methenyltetrahydrofolate + H2O = (6R)-10-formyltetrahydrofolate + H(+). It participates in one-carbon metabolism; tetrahydrofolate interconversion. Its function is as follows. Catalyzes the oxidation of 5,10-methylenetetrahydrofolate to 5,10-methenyltetrahydrofolate and then the hydrolysis of 5,10-methenyltetrahydrofolate to 10-formyltetrahydrofolate. This is Bifunctional protein FolD from Staphylococcus epidermidis (strain ATCC 12228 / FDA PCI 1200).